We begin with the raw amino-acid sequence, 585 residues long: FAD-linked oxidoreductase apf9 (585 aa).

Residues 1 to 19 form the signal peptide; sequence MKPHTVSLVLSNLASLAAA. Asparagine 40, asparagine 92, and asparagine 117 each carry an N-linked (GlcNAc...) asparagine glycan. The 187-residue stretch at 108 to 294 folds into the FAD-binding PCMH-type domain; it reads IGNSPVYVVN…TEITVKTYPT (187 aa). A Pros-8alpha-FAD histidine modification is found at histidine 145. N-linked (GlcNAc...) asparagine glycans are attached at residues asparagine 352, asparagine 412, and asparagine 495.

This sequence belongs to the oxygen-dependent FAD-linked oxidoreductase family. The cofactor is FAD.

It functions in the pathway secondary metabolite biosynthesis. FAD-linked oxidoreductase; part of the gene cluster that mediates the biosynthesis of the cyclic tetrapeptide apicidin F (APF). The non-ribosomal peptide synthetase apf1 incorporates four different amino acids to produce apicidin F: L-phenylalanine, D-pipecolic acid (D-pip), N-methoxy-L-tryptophan and L-2-aminooctanedioic acid. L-Phenylalanine is the only proteinogenic amino acid directly used by apf1. The 3 other apf1 substrates are non-proteinogenic and have to be modified by other enzymes of the cluster. Lysine is converted to delta-1-pyrroline-5-carboxylate (P5C) which is reduced to L-pipecolic acid (L-pip) by apf3. L-pip is epimerized to D-pip, probably by apf1 activity, prior to incorporation. L-Tryptophan is N-oxidyzed by one of the cytochrome P450 monooxygenases (apf7 or apf8), and further methylated at the hydroxy group by the O-methyltransferase apf6 to yield N-methoxy-L-tryptophan. The synthesis of the fourth apf1 substrate is more complex. The fatty acid synthase apf5 is involved in the synthesis of the octanoic acid backbone of L-2-aminooctanedioic acid by fixing one acetyl-CoA unit and three malonyl-CoA units. Then one of the cytochrome P450 monooxygenases (apf7 or apf8) may oxidize this backbone to 2-oxooctanoic acid. The aminotransferase apf4 is predicted to catalyze the exchange of the keto group with an amino group. The next step would be the oxidation of 2-aminooctanoic acid by one of the cytochrome P450 monooxygenases (apf7 or apf8). The last step is the oxidation of 2-amino-8-hydroxyoctanoic acid to 2-aminooctanedioic acid is catalyzed by the FAD-dependent monooxygenase apf9. This Gibberella fujikuroi (strain CBS 195.34 / IMI 58289 / NRRL A-6831) (Bakanae and foot rot disease fungus) protein is FAD-linked oxidoreductase apf9.